A 1203-amino-acid polypeptide reads, in one-letter code: Regulator of telomere elongation helicase 1 (1203 aa).

The region spanning 7 to 296 (NGVTVDFPFQ…ARVTQQGELQ (290 aa)) is the Helicase ATP-binding domain. 42–49 (SPTGTGKT) serves as a coordination point for ATP. Residues cysteine 145, cysteine 163, cysteine 172, and cysteine 207 each contribute to the [4Fe-4S] cluster site. Residues 151–167 (KKQESNHMQISLCRKKV) carry the Nuclear localization signal motif. Positions 250-253 (DEAH) match the DEAH box motif. The short motif at 871-877 (QKGGRKK) is the Nuclear localization signal element. Disordered regions lie at residues 998–1020 (QLDP…TSKG) and 1120–1203 (TTGK…RSKQ). Residues 1123-1134 (KDLELEGPRDES) show a composition bias toward basic and acidic residues. The PIP-box signature appears at 1160–1167 (QSKISSFF). Over residues 1169 to 1181 (QRPDESVRSDDTT) the composition is skewed to basic and acidic residues.

This sequence belongs to the helicase family. RAD3/XPD subfamily. Interacts with TERF1. Interacts (via PIP-box) with PCNA; the interaction is direct and essential for suppressing telomere fragility. Interacts with MMS19; the interaction mediates the association of RTEL1 with the cytosolic iron-sulfur protein assembly (CIA) complex.

The protein localises to the nucleus. It carries out the reaction ATP + H2O = ADP + phosphate + H(+). In terms of biological role, a probable ATP-dependent DNA helicase implicated in telomere-length regulation, DNA repair and the maintenance of genomic stability. Acts as an anti-recombinase to counteract toxic recombination and limit crossover during meiosis. Regulates meiotic recombination and crossover homeostasis by physically dissociating strand invasion events and thereby promotes noncrossover repair by meiotic synthesis dependent strand annealing (SDSA) as well as disassembly of D loop recombination intermediates. Also disassembles T loops and prevents telomere fragility by counteracting telomeric G4-DNA structures, which together ensure the dynamics and stability of the telomere. The sequence is that of Regulator of telomere elongation helicase 1 (Rtel1) from Mus spretus (Western Mediterranean mouse).